The following is a 173-amino-acid chain: Alpha-crystallin A chain (173 aa).

At methionine 1 the chain carries N-acetylmethionine. Positions 1 to 63 are required for complex formation with BFSP1 and BFSP2; sequence MDITIQHPWF…RTVLESGISE (63 aa). Glutamine 6 bears the Deamidated glutamine; partial mark. Serine 45 bears the Phosphoserine mark. A Deamidated glutamine; partial modification is found at glutamine 50. The sHSP domain maps to 52–164; the sequence is LFRTVLESGI…SDRSIPVSRE (113 aa). 2 positions are modified to N6-acetyllysine: lysine 70 and lysine 99. The Zn(2+) site is built by histidine 100, glutamate 102, and histidine 107. Serine 122 is subject to Phosphoserine. Asparagine 123 bears the Deamidated asparagine; partial mark. Residues 146–167 show a composition bias toward basic and acidic residues; sequence IHSDMDASHSDRSIPVSREEKP. The tract at residues 146 to 173 is disordered; sequence IHSDMDASHSDRSIPVSREEKPTLAPSS. Position 154 (histidine 154) interacts with Zn(2+). A glycan (O-linked (GlcNAc) serine) is linked at serine 162.

Belongs to the small heat shock protein (HSP20) family. Heteromer composed of three CRYAA and one CRYAB subunits. Inter-subunit bridging via zinc ions enhances stability, which is crucial as there is no protein turn over in the lens. Can also form homodimers and homotetramers (dimers of dimers) which serve as the building blocks of homooligomers. Within homooligomers, the zinc-binding motif is created from residues of 3 different molecules. His-100 and Glu-102 from one molecule are ligands of the zinc ion, and His-107 and His-154 residues from additional molecules complete the site with tetrahedral coordination geometry. Part of a complex required for lens intermediate filament formation composed of BFSP1, BFSP2 and CRYAA. Post-translationally, acetylation at Lys-70 may increase chaperone activity. In terms of processing, undergoes age-dependent proteolytical cleavage at the C-terminus.

The protein resides in the cytoplasm. It is found in the nucleus. Its function is as follows. Contributes to the transparency and refractive index of the lens. Acts as a chaperone, preventing aggregation of various proteins under a wide range of stress conditions. Required for the correct formation of lens intermediate filaments as part of a complex composed of BFSP1, BFSP2 and CRYAA. The protein is Alpha-crystallin A chain (CRYAA) of Osphranter rufus (Red kangaroo).